The sequence spans 571 residues: Urease subunit alpha (571 aa).

The 439-residue stretch at Gly-133–Phe-571 folds into the Urease domain. Residues His-138, His-140, and Lys-221 each coordinate Ni(2+). At Lys-221 the chain carries N6-carboxylysine. His-223 is a substrate binding site. Residues His-250 and His-276 each coordinate Ni(2+). His-324 serves as the catalytic Proton donor. Asp-364 contacts Ni(2+).

It belongs to the metallo-dependent hydrolases superfamily. Urease alpha subunit family. Heterotrimer of UreA (gamma), UreB (beta) and UreC (alpha) subunits. Three heterotrimers associate to form the active enzyme. The cofactor is Ni cation. In terms of processing, carboxylation allows a single lysine to coordinate two nickel ions.

The protein localises to the cytoplasm. It carries out the reaction urea + 2 H2O + H(+) = hydrogencarbonate + 2 NH4(+). It participates in nitrogen metabolism; urea degradation; CO(2) and NH(3) from urea (urease route): step 1/1. In Staphylococcus epidermidis (strain ATCC 35984 / DSM 28319 / BCRC 17069 / CCUG 31568 / BM 3577 / RP62A), this protein is Urease subunit alpha.